Here is a 201-residue protein sequence, read N- to C-terminus: Putative toxin HigB2 (201 aa).

The protein belongs to the mycobacterial HigB family.

In terms of biological role, putative toxic component of a type II toxin-antitoxin (TA) system. Its cognate antitoxin would be HigA2. The chain is Putative toxin HigB2 from Mycobacterium tuberculosis (strain ATCC 25618 / H37Rv).